Consider the following 187-residue polypeptide: Cytochrome c oxidase assembly protein CtaG (187 aa).

At 1-9 (MSKKSNKNL) the chain is on the cytoplasmic side. Residues 10-30 (AFSLLGLIISMVLLSFASVPI) form a helical; Signal-anchor for type II membrane protein membrane-spanning segment. Residues 31-187 (YNLFCKVTGY…IASLRGNTKY (157 aa)) are Periplasmic-facing.

This sequence belongs to the COX11/CtaG family.

The protein localises to the cell inner membrane. In terms of biological role, exerts its effect at some terminal stage of cytochrome c oxidase synthesis, probably by being involved in the insertion of the copper B into subunit I. The chain is Cytochrome c oxidase assembly protein CtaG from Rickettsia felis (strain ATCC VR-1525 / URRWXCal2) (Rickettsia azadi).